Consider the following 434-residue polypeptide: Na(+)/H(+) antiporter NhaA 1 (434 aa).

10 consecutive transmembrane segments (helical) span residues 30–50 (TGGL…NVAG), 70–90 (LSIE…VTGL), 108–128 (ALPI…FVLV), 141–161 (VGWA…LAVV), 172–192 (FLLT…AIFY), 195–215 (QVHW…TVAV), 286–306 (FAVP…VSGF), 318–338 (VIAG…WLLA), 354–374 (VLGM…IGSL), and 386–406 (VTLG…VVLS).

Belongs to the NhaA Na(+)/H(+) (TC 2.A.33) antiporter family.

It is found in the cell membrane. It carries out the reaction Na(+)(in) + 2 H(+)(out) = Na(+)(out) + 2 H(+)(in). Na(+)/H(+) antiporter that extrudes sodium in exchange for external protons. This is Na(+)/H(+) antiporter NhaA 1 from Kineococcus radiotolerans (strain ATCC BAA-149 / DSM 14245 / SRS30216).